A 511-amino-acid chain; its full sequence is Aldehyde dehydrogenase X, mitochondrial (511 aa).

A mitochondrion-targeting transit peptide spans P1–T11. At K45 the chain carries N6-acetyllysine. K46 bears the N6-acetyllysine; alternate mark. An N6-succinyllysine; alternate modification is found at K46. K75 carries the post-translational modification N6-succinyllysine. G256–G261 contacts NAD(+). E279 functions as the Proton acceptor in the catalytic mechanism. C313 (nucleophile) is an active-site residue. K377, K393, and K420 each carry N6-acetyllysine; alternate. N6-succinyllysine; alternate is present on residues K377, K393, and K420. Position 423 is an N6-acetyllysine (K423).

It belongs to the aldehyde dehydrogenase family. In terms of assembly, homotetramer.

The protein resides in the mitochondrion matrix. It carries out the reaction an aldehyde + NAD(+) + H2O = a carboxylate + NADH + 2 H(+). Its pathway is alcohol metabolism; ethanol degradation; acetate from ethanol: step 2/2. Functionally, ALDHs play a major role in the detoxification of alcohol-derived acetaldehyde. They are involved in the metabolism of corticosteroids, biogenic amines, neurotransmitters, and lipid peroxidation. In the cornea, this enzyme may help in the absorption of the damaging UV-B, as well as in the detoxification of the UV-induced peroxidic aldehydes. In Bos taurus (Bovine), this protein is Aldehyde dehydrogenase X, mitochondrial (ALDH1B1).